Here is a 245-residue protein sequence, read N- to C-terminus: DNA polymerase sliding clamp (245 aa).

Belongs to the PCNA family. As to quaternary structure, homotrimer. The subunits circularize to form a toroid; DNA passes through its center. Replication factor C (RFC) is required to load the toroid on the DNA.

Functionally, sliding clamp subunit that acts as a moving platform for DNA processing. Responsible for tethering the catalytic subunit of DNA polymerase and other proteins to DNA during high-speed replication. This Methanosarcina mazei (strain ATCC BAA-159 / DSM 3647 / Goe1 / Go1 / JCM 11833 / OCM 88) (Methanosarcina frisia) protein is DNA polymerase sliding clamp.